The primary structure comprises 272 residues: Protein MGF 110-11L (272 aa).

The chain crosses the membrane as a helical span at residues 1-17 (MKVLLGLLLGYSVLILA). N-linked (GlcNAc...) asparagine; by host glycosylation occurs at asparagine 68. 2 helical membrane-spanning segments follow: residues 129–149 (QFCL…CALC) and 156–176 (TTMK…PVLN). An N-linked (GlcNAc...) asparagine; by host glycan is attached at asparagine 264.

Belongs to the asfivirus MGF 110 family.

The protein resides in the host membrane. In terms of biological role, plays a role in virus cell tropism, and may be required for efficient virus replication in macrophages. The protein is Protein MGF 110-11L of Ornithodoros (relapsing fever ticks).